A 396-amino-acid chain; its full sequence is Acetyl-CoA acetyltransferase (396 aa).

C89 acts as the Acyl-thioester intermediate in catalysis. CoA contacts are provided by residues 223 to 225 and S249; that span reads RKS. Catalysis depends on proton acceptor residues H352 and C382.

This sequence belongs to the thiolase-like superfamily. Thiolase family.

The protein resides in the cytoplasm. It catalyses the reaction 2 acetyl-CoA = acetoacetyl-CoA + CoA. The protein operates within lipid metabolism; butanoate metabolism. Its function is as follows. Involved in syntrophic growth of S.wolfei with butyrate, as part of the butyrate oxidation pathway. Probably catalyzes the beta-keto thiolysis of acetoacetyl-CoA, leading to 2 acetyl-CoA molecules. The polypeptide is Acetyl-CoA acetyltransferase (Syntrophomonas wolfei subsp. wolfei (strain DSM 2245B / Goettingen)).